The following is a 388-amino-acid chain: Carbamoyl phosphate synthase small chain (388 aa).

The CPSase stretch occupies residues 1–198 (MSQDLLPGVT…WPEGYAKLDK (198 aa)). L-glutamine is bound by residues Ser53, Gly250, and Gly252. A Glutamine amidotransferase type-1 domain is found at 202–388 (EVVVIDYGVK…RFAGLMDAAK (187 aa)). The Nucleophile role is filled by Cys279. L-glutamine is bound by residues Leu280, Gln283, Asn321, Gly323, and Phe324. Catalysis depends on residues His363 and Glu365.

This sequence belongs to the CarA family. Composed of two chains; the small (or glutamine) chain promotes the hydrolysis of glutamine to ammonia, which is used by the large (or ammonia) chain to synthesize carbamoyl phosphate. Tetramer of heterodimers (alpha,beta)4.

It catalyses the reaction hydrogencarbonate + L-glutamine + 2 ATP + H2O = carbamoyl phosphate + L-glutamate + 2 ADP + phosphate + 2 H(+). It carries out the reaction L-glutamine + H2O = L-glutamate + NH4(+). Its pathway is amino-acid biosynthesis; L-arginine biosynthesis; carbamoyl phosphate from bicarbonate: step 1/1. The protein operates within pyrimidine metabolism; UMP biosynthesis via de novo pathway; (S)-dihydroorotate from bicarbonate: step 1/3. In terms of biological role, small subunit of the glutamine-dependent carbamoyl phosphate synthetase (CPSase). CPSase catalyzes the formation of carbamoyl phosphate from the ammonia moiety of glutamine, carbonate, and phosphate donated by ATP, constituting the first step of 2 biosynthetic pathways, one leading to arginine and/or urea and the other to pyrimidine nucleotides. The small subunit (glutamine amidotransferase) binds and cleaves glutamine to supply the large subunit with the substrate ammonia. In Caulobacter vibrioides (strain ATCC 19089 / CIP 103742 / CB 15) (Caulobacter crescentus), this protein is Carbamoyl phosphate synthase small chain.